We begin with the raw amino-acid sequence, 308 residues long: Uridine diphosphate glucose pyrophosphatase NUDT22 (308 aa).

The substrate site is built by F56, Y86, R138, A143, D150, H155, and E157. Residues A117–H284 enclose the Nudix hydrolase domain. The short motif at G174–L195 is the Nudix box element. Residues E188 and E192 each coordinate Mg(2+). Residue S273 coordinates substrate.

It belongs to the Nudix hydrolase family. Requires Mg(2+) as cofactor.

The catalysed reaction is UDP-sugar + H2O = UMP + alpha-D-aldose 1-phosphate.. Functionally, hydrolyzes UDP-glucose to glucose 1-phosphate and UMP and UDP-galactose to galactose 1-phosphate and UMP. Preferred substrate is UDP-glucose. The polypeptide is Uridine diphosphate glucose pyrophosphatase NUDT22 (Nudt22) (Mus musculus (Mouse)).